Reading from the N-terminus, the 187-residue chain is HTH-type dhaKLM operon transcriptional activator DhaS (187 aa).

The HTH tetR-type domain occupies 12–72 (IITQKIIAKA…WIFENDFAEL (61 aa)). Positions 35–54 (SVSDIMQTAKIRRQTFYNYF) form a DNA-binding region, H-T-H motif.

As to quaternary structure, homodimer. Interacts with a homodimer of DhaQ.

Functionally, in complex with DhaQ, upon activation by dihydroxyacetone, activates transcription of the dhaKLM operon. Binds the inverted repeat sequence 5'-GGACACATN(6)ATTTGTCC-3' located upstream of and partially overlapping with the -35 promoter sequence of the dhaKLM operon promoter. This chain is HTH-type dhaKLM operon transcriptional activator DhaS (dhaS), found in Lactococcus lactis subsp. lactis (strain IL1403) (Streptococcus lactis).